Consider the following 154-residue polypeptide: Nuclear cap-binding protein subunit 2 (154 aa).

Positions 1 to 23 (MSTSVDLSSYRDQHFKGSRSEQE) are disordered. Basic and acidic residues predominate over residues 9 to 23 (SYRDQHFKGSRSEQE). MRNA-binding positions include Tyr-10, Tyr-33, 102 to 106 (RVDWD), 113 to 117 (RQYGR), and 123 to 124 (QV). An RRM domain is found at 30 to 108 (TTLYVGNLSF…RLIRVDWDAG (79 aa)).

The protein belongs to the RRM NCBP2 family. In terms of assembly, component of the nuclear cap-binding complex (CBC), a heterodimer composed of Cbp80 and Cbp20 that interacts with m7GpppG-capped RNA. Interacts with Ars2.

The protein resides in the nucleus. Its function is as follows. Component of the cap-binding complex (CBC), which binds co-transcriptionally to the 5' cap of pre-mRNAs and is involved in various processes such as pre-mRNA splicing and RNA-mediated gene silencing (RNAi). The CBC complex is involved in miRNA-mediated RNA interference via its interaction with Ars2 and is required for primary microRNAs (miRNAs) processing. Also involved in innate immunity via the short interfering RNAs (siRNAs) processing machinery by restricting the viral RNA production. In the CBC complex, Cbp20 recognizes and binds capped RNAs (m7GpppG-capped RNA) but requires Cbp80 to stabilize the movement of its N-terminal loop and lock the CBC into a high affinity cap-binding state with the cap structure. The chain is Nuclear cap-binding protein subunit 2 (Cbp20) from Drosophila ananassae (Fruit fly).